A 138-amino-acid chain; its full sequence is Small ribosomal subunit protein uS11c (138 aa).

The interval 1-22 is disordered; sequence MTKPIPRIGSRRSGRIGSRKAG. A compositionally biased stretch (basic residues) spans 9–22; the sequence is GSRRSGRIGSRKAG.

Belongs to the universal ribosomal protein uS11 family. As to quaternary structure, part of the 30S ribosomal subunit.

It is found in the plastid. Its subcellular location is the chloroplast. The polypeptide is Small ribosomal subunit protein uS11c (Piper cenocladum (Ant piper)).